The primary structure comprises 282 residues: Aquaporin PIP2-7 (282 aa).

The disordered stretch occupies residues 1-21; sequence MSKEVSVEGEQPPVKDYTDPP. Residues 1 to 38 lie on the Cytoplasmic side of the membrane; the sequence is MSKEVSVEGEQPPVKDYTDPPPEPLLNFGELRLWSFYR. Residues 39–59 traverse the membrane as a helical segment; the sequence is ALIAEFVATLLFLYVTIATVI. Residues 60 to 71 are Extracellular-facing; the sequence is GHKEQNAADQCS. A helical membrane pass occupies residues 72 to 92; the sequence is GVGLLGIAWAFGGMIFILVYC. At 93 to 120 the chain is on the cytoplasmic side; it reads TAGISGGHINPAVTLGLFLARKVSLIRA. An NPA 1 motif is present at residues 102 to 104; sequence NPA. A helical membrane pass occupies residues 121–141; that stretch reads LLYMVAQCLGAIVGVGIVKGI. The Extracellular segment spans residues 142 to 162; the sequence is MKHQYNSLGGGANVVAAGYSK. The helical transmembrane segment at 163-183 threads the bilayer; the sequence is GTALGAEIIGTFVLVYTVFSA. Residues 184 to 196 are Cytoplasmic-facing; it reads TDPKRSARDSHVP. The helical transmembrane segment at 197-217 threads the bilayer; sequence VLAPLPIGFAVFMVHLATIPI. The Extracellular segment spans residues 218–244; the sequence is TGTGINPARSLGAAVIYNQDKPWDDHW. Residues 223-225 carry the NPA 2 motif; that stretch reads NPA. Residues 245 to 265 traverse the membrane as a helical segment; that stretch reads ILWVGPFVGALAAAAYHQYIL. Residues 266–282 lie on the Cytoplasmic side of the membrane; it reads RAAAIKALGSFRSNPSN.

This sequence belongs to the MIP/aquaporin (TC 1.A.8) family. PIP (TC 1.A.8.11) subfamily. Expressed in roots, leaves and fruits.

The protein localises to the cell membrane. Its function is as follows. Water channel required to facilitate the transport of water across cell membrane; mercury-insensitive. Contributes to the tolerance to multiple abiotic stresses including salt (NaCl), cold and water deprivation, by modulating cytosolic K(+)/Na(+) ratio, maintaining osmotic balance, and reducing membrane injury (e.g. oxidative injury). Also regulates the expression of abscisic acid (ABA)- biosynthetic and -responsive genes during dehydration and salt stresses. The protein is Aquaporin PIP2-7 of Musa acuminata (Banana).